The following is a 623-amino-acid chain: Leucine-rich repeat, immunoglobulin-like domain and transmembrane domain-containing protein 1 (623 aa).

Positions 1–21 (MWVALGMLWLLALGGPHQAWS) are cleaved as a signal peptide. An LRRNT domain is found at 22–59 (FCPSQCSCSLHILSDGSKARTVVCSDPDLTLPPASIPP). Residues 22–526 (FCPSQCSCSL…EVVDAEGTQR (505 aa)) are Lumenal-facing. LRR repeat units follow at residues 60 to 81 (DTCKLRLERTAIRRVPGETFRP), 84 to 105 (RLEQLWLPYNALSELSTLMLRG), 108 to 128 (RLRELRLPGNHLVTFPWAALK), 132 to 153 (QLQLLDLQANRLSTLPPEAVHF), and 156 to 177 (NLTFLDLSNNQLMRLPEELLDT). Asn156 carries N-linked (GlcNAc...) asparagine glycosylation. In terms of domain architecture, LRRCT spans 201 to 253 (NPWVCDCRLYDLVHLLDGWASNLIFIEARLRCGSPRSLAGVAFSQLELRKCQS). The 67-residue stretch at 266-332 (PLGSTVLLRC…SGDYICQAKN (67 aa)) folds into the Ig-like C2-type domain. Cys275 and Cys328 are disulfide-bonded. Asn296 and Asn455 each carry an N-linked (GlcNAc...) asparagine glycan. A Fibronectin type-III domain is found at 430–518 (MVRSLKVVGD…QCVIFSTDEV (89 aa)). One copy of the LRR 6 repeat lies at 525–548 (QRLINMVVISVAAIIALPPTLLVC). Residues 527–547 (LINMVVISVAAIIALPPTLLV) traverse the membrane as a helical segment. Residues 548-623 (CCGALRRRCH…GGRRINEYFC (76 aa)) are Cytoplasmic-facing.

In terms of assembly, homodimer. Interacts with LRIT2; may form a heterodimer with LRIT2. Interacts (via its N-terminal extracellular domain) with metabotropic glutamate receptor GRM6. Interacts (via its extreme C-terminus) with the scaffold protein FRMPD2 (via the third PDZ domain); the interaction leads to their colocalization in photoreceptor synapses. As to expression, retina, outer segments of photoreceptor cells.

The protein localises to the endoplasmic reticulum membrane. Its subcellular location is the cell projection. It localises to the dendrite. Photoreceptor synaptic protein essential for normal vision. Involved in synapse formation in cone photoreceptor cells. The polypeptide is Leucine-rich repeat, immunoglobulin-like domain and transmembrane domain-containing protein 1 (Lrit1) (Rattus norvegicus (Rat)).